The following is a 1033-amino-acid chain: TBC domain-containing protein kinase-like protein (1033 aa).

Disordered stretches follow at residues 1–21, 35–55, and 81–101; these read MMKSDEGVSGNSNNNNNYKFK, YDNNNNNNNNNNNNDDNNTVT, and GSIGGSSSSSSTSNSVSTPKP. Composition is skewed to low complexity over residues 36-52 and 81-97; these read DNNNNNNNNNNNNDDNN and GSIGGSSSSSSTSNSVS. Residues 72 to 425 enclose the Protein kinase domain; the sequence is NKLTINQNNG…SETLLDHPYF (354 aa). ATP-binding positions include 78–86 and K113; that span reads QNNGSIGGS. The span at 535–546 shows a compositional bias: polar residues; sequence STNSGLNSPQPY. The tract at residues 535–560 is disordered; it reads STNSGLNSPQPYQHQHHQHQHQHQHP. The segment covering 548 to 558 has biased composition (basic residues); that stretch reads HQHHQHQHQHQ. The Rab-GAP TBC domain maps to 657–844; sequence FVPPILRGDI…ILWDSILLCP (188 aa).

It belongs to the protein kinase superfamily. Ser/Thr protein kinase family.

This Dictyostelium discoideum (Social amoeba) protein is TBC domain-containing protein kinase-like protein (tbck).